We begin with the raw amino-acid sequence, 418 residues long: Zinc finger protein 566 (418 aa).

Residues 6 to 77 (VMFSDVSVDF…DRELTRGQWP (72 aa)) form the KRAB domain. A C2H2-type 1; degenerate zinc finger spans residues 169-193 (KFCASKEYRKTFRHGSQFATHEIIH). C2H2-type zinc fingers lie at residues 199-221 (YECKECGKSFRHPSRLTHHQKIH), 227-249 (FECKECGKTFICGSDLTRHHRIH), 255-277 (YECKECGKAFSSGSNFTRHQRIH), 283-305 (YECKECGKAFSSGSNFTQHQRIH), 311-333 (YECKECGNAFSQSSQLIKHQRIH), 339-361 (YECKECEKAFRSGSDLTRHQRIH), and 367-389 (YECKICGKAYSQSSQLISHHRIH). Residues lysine 314 and lysine 328 each participate in a glycyl lysine isopeptide (Lys-Gly) (interchain with G-Cter in SUMO2) cross-link.

This sequence belongs to the krueppel C2H2-type zinc-finger protein family.

Its subcellular location is the nucleus. In terms of biological role, may be involved in transcriptional regulation. This chain is Zinc finger protein 566 (ZNF566), found in Homo sapiens (Human).